Here is a 187-residue protein sequence, read N- to C-terminus: MNLQHHFLIAMPALQDPIFRRSVVYICEHNQDGAMGIIINKPLENLQIEGILEKLKITPEPRDSAIRLDKAVMLGGPLAEDRGFILHTPPSRFASSIRISDNTVITTSRDVLETLGTQQQPSDVLVALGYASWDKGQLEQELLDNAWLTAPADLNILFKTPIAERWREAAKLIGIDILTMPGVAGHA.

It belongs to the UPF0301 (AlgH) family.

In Salmonella heidelberg (strain SL476), this protein is UPF0301 protein YqgE.